A 336-amino-acid chain; its full sequence is D-alanine--D-alanine ligase (336 aa).

Residues 124–330 (KMWFSALGIP…FTQYLSLVIN (207 aa)) form the ATP-grasp domain. 154-209 (ALEKWGSIFVKAASQGSSVGCYKVDEASKVLGVLKDAFGYAPYVIVEKTIKARELE) contacts ATP. Mg(2+)-binding residues include Asp284, Glu297, and Asn299.

The protein belongs to the D-alanine--D-alanine ligase family. Mg(2+) is required as a cofactor. It depends on Mn(2+) as a cofactor.

The protein localises to the cytoplasm. It catalyses the reaction 2 D-alanine + ATP = D-alanyl-D-alanine + ADP + phosphate + H(+). The protein operates within cell wall biogenesis; peptidoglycan biosynthesis. Functionally, cell wall formation. The protein is D-alanine--D-alanine ligase of Shewanella oneidensis (strain ATCC 700550 / JCM 31522 / CIP 106686 / LMG 19005 / NCIMB 14063 / MR-1).